The primary structure comprises 220 residues: MDLKQIAGEYAATFVKDGMKVGLGTGSTAYWTIQKLGQRVKEGLSIQAVPTSKETEALAQQLNIPLISLNDVQSLDLTIDGADEIDSNLQLIKGGGGALLREKIVASSSKELIIIVDESKVVTRLGTFPLPIEIIPFAWKQTESKIQSLGCQTTLRLKNNETFITDNNNMIVDCIFPNHIPTPSDLHKRLKMITGVVETGLFVNMTSKAIIGTKNGIQEL.

Substrate is bound by residues Thr-25–Thr-28, Asp-80–Asp-83, and Lys-93–Gly-96. The Proton acceptor role is filled by Glu-102. Lys-120 contacts substrate.

This sequence belongs to the ribose 5-phosphate isomerase family. As to quaternary structure, homodimer.

The catalysed reaction is aldehydo-D-ribose 5-phosphate = D-ribulose 5-phosphate. Its pathway is carbohydrate degradation; pentose phosphate pathway; D-ribose 5-phosphate from D-ribulose 5-phosphate (non-oxidative stage): step 1/1. Catalyzes the reversible conversion of ribose-5-phosphate to ribulose 5-phosphate. This is Ribose-5-phosphate isomerase A from Bacillus thuringiensis subsp. konkukian (strain 97-27).